Reading from the N-terminus, the 124-residue chain is MSKTAEILEAVKGLTVLELAELVKAFEEEFGVSAAAPVAVAAAPGAAAAPVAEEQTEFDVVLMNAGAGKINVIKVVREITGLGLKEAKELVDGAPKPVKEKVSKDDAEAIKAKLVEAGATVEVK.

The protein belongs to the bacterial ribosomal protein bL12 family. In terms of assembly, homodimer. Part of the ribosomal stalk of the 50S ribosomal subunit. Forms a multimeric L10(L12)X complex, where L10 forms an elongated spine to which 2 to 4 L12 dimers bind in a sequential fashion. Binds GTP-bound translation factors.

In terms of biological role, forms part of the ribosomal stalk which helps the ribosome interact with GTP-bound translation factors. Is thus essential for accurate translation. The polypeptide is Large ribosomal subunit protein bL12 (Desulfitobacterium hafniense (strain DSM 10664 / DCB-2)).